A 97-amino-acid polypeptide reads, in one-letter code: Large ribosomal subunit protein uL23 (97 aa).

This sequence belongs to the universal ribosomal protein uL23 family. In terms of assembly, part of the 50S ribosomal subunit. Contacts protein L29, and trigger factor when it is bound to the ribosome.

In terms of biological role, one of the early assembly proteins it binds 23S rRNA. One of the proteins that surrounds the polypeptide exit tunnel on the outside of the ribosome. Forms the main docking site for trigger factor binding to the ribosome. This is Large ribosomal subunit protein uL23 from Limosilactobacillus fermentum (strain NBRC 3956 / LMG 18251) (Lactobacillus fermentum).